Reading from the N-terminus, the 927-residue chain is MAKVRELEEAFVQEQPSPQLPSEIAEECCAQLLGKGLLVYPEDSAYLLAETAAGARSSGEKGGDPGLQVGVKSEMQLNNGNFSSEEEDADTQESKTKAADPQLSQKKSITQMMKDKKKQTQLTLQWLEDNYIVCEGVCLPRCILYAHYLDFCRKEKLEPACAATFGKTIRQKFPLLTTRRLGTRGHSKYHYYGIGIKESSAYYHSVYSGKGLTRFSGSKLKNEGGFTRKYSLSSKTGTLLPEFPSAQHLVYQGCISKDKVDTLIMMYKTHCQCILDNAINGNFEEIQHFLLHFWQGMPDHLLPLLENPVIIDIFCVCDSILYKVLTDVLIPATMQEMPESLLADIRNFAKNWEQWVVSSLENLPEALIDKKIPILRRFVSSLKRQTSFLHLAQIARPALFDQHVVNAMVSDIEKVDLNSIGSQALLTISNSTDTESDIYSEHDSITVFQELKDLLKKNATVEAFIEWLDTVVEQRVIKMSKQNGRSLKKRAQDFLLKWSFFGARVMHNLTLNNASSFGSFHLIRMLLDEYILLAMETQFNNDKEQELQNLLDKYMKNSDASKAAFTASPSSCFLANRNKASSLASDTVKNESHVETSYVPLPSSQPGAIPPALHPFSTEDTDNMPLPGQIELSQSTGHLMTPPISPAIASRGSVINQGPMASRPPSVGTVLSAPTHCSTYAEPIYPTLSPANHDFYGTNSNYQTMFRTQSHPASSLYAHRAEHGRCMAWTEQQLSRDFFGGSCAGSPYNCRPPSSYGPSTHTQESHSMQVLNTGSFNFLSNAGAGSCQGSTLPSNSPNGYYGNNINYSEAHRLGSMVNQHVSVISSVRSLPPYSDIHDPLNILDDSSRKQNNSFYADTLSPVACRTTVVASNLQTQIPSSSSQCMYGTSNQYPVQDSLDSNAASNREMVSSLPPINTVFMGTAAGDT.

Disordered stretches follow at residues 1 to 21 (MAKV…PQLP) and 81 to 108 (NFSS…QKKS). Positions 123–198 (TLQWLEDNYI…YHYYGIGIKE (76 aa)) form a DNA-binding region, RFX-type winged-helix.

This sequence belongs to the RFX family. As to quaternary structure, interacts with RFX3. In the adult pancreas, expression is restricted to the islets where it could be detected in all endocrine lineages.

The protein localises to the nucleus. Its function is as follows. Transcription factor required to direct islet cell differentiation during endocrine pancreas development. Specifically required for the differentiation of 4 of the 5 islet cell types and for the production of insulin. Not required for pancreatic PP (polypeptide-producing) cells differentiation. Acts downstream of NEUROG3 and regulates the transcription factors involved in beta-cell maturation and function, thereby restricting the expression of the beta-cell differentiation and specification genes, and thus the beta-cell fate choice. Activates transcription by forming a heterodimer with RFX3 and binding to the X-box in the promoter of target genes. Involved in glucose-stimulated insulin secretion by promoting insulin and L-type calcium channel gene transcription. The polypeptide is DNA-binding protein RFX6 (Rfx6) (Mus musculus (Mouse)).